A 41-amino-acid polypeptide reads, in one-letter code: Bacteriocin (41 aa).

A disulfide bridge links Cys9 with Cys14.

It localises to the secreted. Functionally, bacteriocin active against S.aureus, S.typhi, B.thuringiensis, Klebsiella sp., E.coli KL16 and E.coli Gj137. This is Bacteriocin from Lactococcus sp.